The chain runs to 181 residues: Putative manganese efflux pump MntP (181 aa).

6 consecutive transmembrane segments (helical) span residues 5-25 (LIAL…IALG), 36-56 (MFKV…MGMV), 66-86 (GLFA…VMIV), 102-122 (IGLF…GLSL), 130-150 (ALAV…GLFI), and 158-178 (VGPY…VKLL).

Belongs to the MntP (TC 9.B.29) family.

The protein localises to the cell membrane. In terms of biological role, probably functions as a manganese efflux pump. In Halalkalibacterium halodurans (strain ATCC BAA-125 / DSM 18197 / FERM 7344 / JCM 9153 / C-125) (Bacillus halodurans), this protein is Putative manganese efflux pump MntP.